The sequence spans 159 residues: SsrA-binding protein (159 aa).

Belongs to the SmpB family.

It is found in the cytoplasm. Required for rescue of stalled ribosomes mediated by trans-translation. Binds to transfer-messenger RNA (tmRNA), required for stable association of tmRNA with ribosomes. tmRNA and SmpB together mimic tRNA shape, replacing the anticodon stem-loop with SmpB. tmRNA is encoded by the ssrA gene; the 2 termini fold to resemble tRNA(Ala) and it encodes a 'tag peptide', a short internal open reading frame. During trans-translation Ala-aminoacylated tmRNA acts like a tRNA, entering the A-site of stalled ribosomes, displacing the stalled mRNA. The ribosome then switches to translate the ORF on the tmRNA; the nascent peptide is terminated with the 'tag peptide' encoded by the tmRNA and targeted for degradation. The ribosome is freed to recommence translation, which seems to be the essential function of trans-translation. This is SsrA-binding protein from Coxiella burnetii (strain CbuK_Q154) (Coxiella burnetii (strain Q154)).